We begin with the raw amino-acid sequence, 161 residues long: Putative 4-hydroxy-4-methyl-2-oxoglutarate aldolase (161 aa).

Residues 75-78 (GDQL) and Arg-97 contribute to the substrate site. A divalent metal cation is bound at residue Asp-98.

The protein belongs to the class II aldolase/RraA-like family. As to quaternary structure, homotrimer. A divalent metal cation serves as cofactor.

The enzyme catalyses 4-hydroxy-4-methyl-2-oxoglutarate = 2 pyruvate. It carries out the reaction oxaloacetate + H(+) = pyruvate + CO2. Its function is as follows. Catalyzes the aldol cleavage of 4-hydroxy-4-methyl-2-oxoglutarate (HMG) into 2 molecules of pyruvate. Also contains a secondary oxaloacetate (OAA) decarboxylase activity due to the common pyruvate enolate transition state formed following C-C bond cleavage in the retro-aldol and decarboxylation reactions. The sequence is that of Putative 4-hydroxy-4-methyl-2-oxoglutarate aldolase from Vibrio cholerae serotype O1 (strain ATCC 39315 / El Tor Inaba N16961).